Here is a 360-residue protein sequence, read N- to C-terminus: Bifunctional protein FolD 4, chloroplastic (360 aa).

The transit peptide at 1–51 (MASMMFTDCSSTTTSRLIHLNRSSGTFLLRQCVGQLRLQTTASGRGCCIRS) directs the protein to the chloroplast. Residue S52 is modified to N-acetylserine.

Belongs to the tetrahydrofolate dehydrogenase/cyclohydrolase family. As to quaternary structure, homodimer.

The protein resides in the plastid. Its subcellular location is the chloroplast. It carries out the reaction (6R)-5,10-methylene-5,6,7,8-tetrahydrofolate + NADP(+) = (6R)-5,10-methenyltetrahydrofolate + NADPH. It catalyses the reaction (6R)-5,10-methenyltetrahydrofolate + H2O = (6R)-10-formyltetrahydrofolate + H(+). It participates in one-carbon metabolism; tetrahydrofolate interconversion. In terms of biological role, catalyzes the oxidation of 5,10-methylenetetrahydrofolate to 5,10-methenyltetrahydrofolate and then the hydrolysis of 5,10-methenyltetrahydrofolate to 10-formyltetrahydrofolate. The sequence is that of Bifunctional protein FolD 4, chloroplastic (FOLD4) from Arabidopsis thaliana (Mouse-ear cress).